We begin with the raw amino-acid sequence, 486 residues long: MADGVPAREPRFTAPMDGRSTFGRVRRIHFVGIGGAGMGGIAEVLHNLGFTITGSDVRSGAVVERLVGLGVTVQIGHDPVHVQGMDAVVVSTAVTEDNPEVQAARQQRIPVVPRAEMLAELMRFRHGVAVAGTHGKTTTTSLLASCLAEGELDPTFVIGGRLISAGAHARLGAGPYLVAEADESDASFLHLKPMMAAVTNVDADHLGTYGGDFEALRRTFIEFLHHLPFYGLAVLCIDDPEVRRLRGEIGRPVLTYGFSEDADVRVSGMEADGHRTRFRIEEGDGAAFAVELSLPGRHNVLNAAAAIALARELGVDVAAIQRALSSFQGIGRRFQVYPDIPLAEGAAALVDDYAHHPRELEATLQAARAAWPERRLVVVFQPHRYSRTRELFDDFARVLSGTDALVLTEVYAAGEARLPGADGRALASAVRDRGGAQPIFAESLDEVPGLLAGLLRDDDVVLTLGAGSIGGLPAQLGGGLTAGGGA.

ATP is bound at residue 132 to 138; the sequence is GTHGKTT.

It belongs to the MurCDEF family.

It is found in the cytoplasm. It catalyses the reaction UDP-N-acetyl-alpha-D-muramate + L-alanine + ATP = UDP-N-acetyl-alpha-D-muramoyl-L-alanine + ADP + phosphate + H(+). It functions in the pathway cell wall biogenesis; peptidoglycan biosynthesis. Cell wall formation. The protein is UDP-N-acetylmuramate--L-alanine ligase of Halorhodospira halophila (strain DSM 244 / SL1) (Ectothiorhodospira halophila (strain DSM 244 / SL1)).